Here is a 356-residue protein sequence, read N- to C-terminus: 5-formaminoimidazole-4-carboxamide-1-(beta)-D-ribofuranosyl 5'-monophosphate synthetase 2 (356 aa).

The 5-amino-1-(5-phospho-beta-D-ribosyl)imidazole-4-carboxamide site is built by His27 and Ser94. An ATP-grasp domain is found at 101–333; sequence RENFTGMAVP…YSDLMQKRLS (233 aa). ATP-binding positions include 145-196 and Glu226; that span reads PHDI…TRYD. Asn255 provides a ligand contact to 5-amino-1-(5-phospho-beta-D-ribosyl)imidazole-4-carboxamide. Positions 293 and 306 each coordinate Mg(2+).

It belongs to the phosphohexose mutase family. Mg(2+) is required as a cofactor. It depends on Mn(2+) as a cofactor.

The catalysed reaction is 5-amino-1-(5-phospho-beta-D-ribosyl)imidazole-4-carboxamide + formate + ATP = 5-formamido-1-(5-phospho-D-ribosyl)imidazole-4-carboxamide + ADP + phosphate. The protein operates within purine metabolism; IMP biosynthesis via de novo pathway; 5-formamido-1-(5-phospho-D-ribosyl)imidazole-4-carboxamide from 5-amino-1-(5-phospho-D-ribosyl)imidazole-4-carboxamide (formate route): step 1/1. Catalyzes the ATP- and formate-dependent formylation of 5-aminoimidazole-4-carboxamide-1-beta-d-ribofuranosyl 5'-monophosphate (AICAR) to 5-formaminoimidazole-4-carboxamide-1-beta-d-ribofuranosyl 5'-monophosphate (FAICAR) in the absence of folates. This is 5-formaminoimidazole-4-carboxamide-1-(beta)-D-ribofuranosyl 5'-monophosphate synthetase 2 from Methanosarcina mazei (strain ATCC BAA-159 / DSM 3647 / Goe1 / Go1 / JCM 11833 / OCM 88) (Methanosarcina frisia).